We begin with the raw amino-acid sequence, 245 residues long: Probable transcriptional regulatory protein pc1328 (245 aa).

The protein belongs to the TACO1 family.

The protein resides in the cytoplasm. In Protochlamydia amoebophila (strain UWE25), this protein is Probable transcriptional regulatory protein pc1328.